The chain runs to 89 residues: uncharacterized protein (89 aa).

It to M.tuberculosis Rv3402c.

This is an uncharacterized protein from Mycobacterium tuberculosis (strain CDC 1551 / Oshkosh).